The sequence spans 534 residues: Prolyl 4-hydroxylase subunit alpha-1 (534 aa).

An N-terminal signal peptide occupies residues 1–17 (MIWYILVVGILLPQSLA). Asn113 is a glycosylation site (N-linked (GlcNAc...) asparagine). Residues 205 to 238 (VSVLDYLSYAVYQQGDLDKALLLTKKLLELDPEH) form a TPR repeat. Residues 258 to 277 (ANKSSSDDQSDQKTTLKKKG) form a disordered region. A glycan (N-linked (GlcNAc...) asparagine) is linked at Asn259. Residues 411-519 (TAEELQVANY…KWVSNKWLHE (109 aa)) enclose the Fe2OG dioxygenase domain. 3 residues coordinate Fe cation: His429, Asp431, and His500. Lys510 is a binding site for 2-oxoglutarate.

Belongs to the P4HA family. In terms of assembly, heterotetramer of two alpha-1 chains and two beta chains (P4HB)(the beta chain is the multi-functional PDI), where P4HB plays the role of a structural subunit; this tetramer catalyzes the formation of 4-hydroxyproline in collagen. Fe(2+) serves as cofactor. It depends on L-ascorbate as a cofactor.

It is found in the endoplasmic reticulum lumen. The enzyme catalyses L-prolyl-[collagen] + 2-oxoglutarate + O2 = trans-4-hydroxy-L-prolyl-[collagen] + succinate + CO2. Catalyzes the post-translational formation of 4-hydroxyproline in -Xaa-Pro-Gly- sequences in collagens and other proteins. This Bos taurus (Bovine) protein is Prolyl 4-hydroxylase subunit alpha-1 (P4HA1).